The primary structure comprises 493 residues: CBL-interacting protein kinase 26 (493 aa).

A Protein kinase domain is found at 12 to 266; sequence YEIGRQLGQG…IPKIKRSAWY (255 aa). ATP-binding positions include 18–26 and K41; that span reads LGQGNFAKV. D134 (proton acceptor) is an active-site residue. The interval 152 to 181 is activation loop; that stretch reads DFGLSALSESKRHDGLLHTTCGTPAYVAPE. The interval 311-332 is disordered; that stretch reads KVYTNGEATTSDSPECSNSDGK. The span at 316 to 332 shows a compositional bias: polar residues; it reads GEATTSDSPECSNSDGK. The 41-residue stretch at 320-360 folds into the NAF domain; sequence TSDSPECSNSDGKQASLSLPNLNAFDIISLSTGFDLSNLFE. A PPI region spans residues 365–394; sequence RREERFTTRQPAAAIFAKLNELARRFKLKI. The tract at residues 465-493 is disordered; it reads GQHQQPEQSMQGMQGEQQPSRLPSQQPQG.

The protein belongs to the protein kinase superfamily. CAMK Ser/Thr protein kinase family. SNF1 subfamily. Mn(2+) serves as cofactor.

The catalysed reaction is L-seryl-[protein] + ATP = O-phospho-L-seryl-[protein] + ADP + H(+). It carries out the reaction L-threonyl-[protein] + ATP = O-phospho-L-threonyl-[protein] + ADP + H(+). CIPK serine-threonine protein kinases interact with CBL proteins. Binding of a CBL protein to the regulatory NAF domain of CIPK protein lead to the activation of the kinase in a calcium-dependent manner. The chain is CBL-interacting protein kinase 26 (CIPK26) from Oryza sativa subsp. japonica (Rice).